We begin with the raw amino-acid sequence, 356 residues long: S-adenosylmethionine:tRNA ribosyltransferase-isomerase (356 aa).

It belongs to the QueA family. In terms of assembly, monomer.

It localises to the cytoplasm. The enzyme catalyses 7-aminomethyl-7-carbaguanosine(34) in tRNA + S-adenosyl-L-methionine = epoxyqueuosine(34) in tRNA + adenine + L-methionine + 2 H(+). It participates in tRNA modification; tRNA-queuosine biosynthesis. Its function is as follows. Transfers and isomerizes the ribose moiety from AdoMet to the 7-aminomethyl group of 7-deazaguanine (preQ1-tRNA) to give epoxyqueuosine (oQ-tRNA). This Escherichia coli O1:K1 / APEC protein is S-adenosylmethionine:tRNA ribosyltransferase-isomerase.